The chain runs to 593 residues: MAAASSSDSDACGAESNEANSKWLDAHYDPMANIHTFSACLALADLHGDGEYKLVVGDLGPGGQQPRLKVLKGPLVMTESPLPALPAAAATFLMEQHEPRTPALALASGPCVYVYKNLRPYFKFSLPQLPPNPLEQDLWNQAKEDRIDPLTLKEMLESIRETAEEPLSIQSLRFLQLELSEMEAFVNQHKSNSIKRQTVITTMTTLKKNLADEDAVSCLVLGTENKELLVLDPEAFTILAKMSLPSVPVFLEVSGQFDVEFRLAAACRNGNIYILRRDSKHPKYCIELSAQPVGLIRVHKVLVVGSTQDSLHGFTHKGKKLWTVQMPAAILTMNLLEQHSRGLQAVMAGLANGEVRIYRDKALLNVIHTPDAVTSLCFGRYGREDNTLIMTTRGGGLIIKILKRTAVFVEGGSEVGPPPAQAMKLNVPRKTRLYVDQTLREREAGTAMHRAFQTDLYLLRLRAARAYLQALESSLSPLSTTAREPLKLHAVVQGLGPTFKLTLHLQNTSTTRPVLGLLVCFLYNEALYSLPRAFFKVPLLVPGLNYPLETFVESLSNKGISDIIKVLVLREGQSAPLLSAHVNMPGSEGLAAA.

Position 2 is an N-acetylalanine (Ala2).

As to quaternary structure, part of BBSome complex, that contains BBS1, BBS2, BBS4, BBS5, BBS7, BBS8/TTC8, BBS9 and BBIP10. Interacts with the C-terminus of RAB3IP. Interacts with CCDC28B and ALDOB. Interacts with PKD1. Highly expressed in the kidney. Also found in fetal tissue, testis, retina, adipose tissue, heart, skeletal muscle and pancreas.

The protein resides in the cell projection. Its subcellular location is the cilium membrane. It is found in the cytoplasm. It localises to the cytoskeleton. The protein localises to the microtubule organizing center. The protein resides in the centrosome. Its subcellular location is the centriolar satellite. The BBSome complex is thought to function as a coat complex required for sorting of specific membrane proteins to the primary cilia. The BBSome complex is required for ciliogenesis but is dispensable for centriolar satellite function. This ciliogenic function is mediated in part by the Rab8 GDP/GTP exchange factor, which localizes to the basal body and contacts the BBSome. Rab8(GTP) enters the primary cilium and promotes extension of the ciliary membrane. Firstly the BBSome associates with the ciliary membrane and binds to RAB3IP/Rabin8, the guanosyl exchange factor (GEF) for Rab8 and then the Rab8-GTP localizes to the cilium and promotes docking and fusion of carrier vesicles to the base of the ciliary membrane. The BBSome complex, together with the LTZL1, controls SMO ciliary trafficking and contributes to the sonic hedgehog (SHH) pathway regulation. Required for proper BBSome complex assembly and its ciliary localization. Plays a role in olfactory cilium biogenesis/maintenance and trafficking. The protein is BBSome complex member BBS1 (BBS1) of Homo sapiens (Human).